We begin with the raw amino-acid sequence, 137 residues long: Large ribosomal subunit protein uL14 (137 aa).

It belongs to the universal ribosomal protein uL14 family. As to quaternary structure, component of the large ribosomal subunit. Mature ribosomes consist of a small (40S) and a large (60S) subunit. The 40S subunit contains about 32 different proteins and 1 molecule of RNA (18S). The 60S subunit contains 45 different proteins and 3 molecules of RNA (25S, 5.8S and 5S).

It is found in the cytoplasm. Functionally, component of the ribosome, a large ribonucleoprotein complex responsible for the synthesis of proteins in the cell. The small ribosomal subunit (SSU) binds messenger RNAs (mRNAs) and translates the encoded message by selecting cognate aminoacyl-transfer RNA (tRNA) molecules. The large subunit (LSU) contains the ribosomal catalytic site termed the peptidyl transferase center (PTC), which catalyzes the formation of peptide bonds, thereby polymerizing the amino acids delivered by tRNAs into a polypeptide chain. The nascent polypeptides leave the ribosome through a tunnel in the LSU and interact with protein factors that function in enzymatic processing, targeting, and the membrane insertion of nascent chains at the exit of the ribosomal tunnel. The polypeptide is Large ribosomal subunit protein uL14 (Candida albicans (strain SC5314 / ATCC MYA-2876) (Yeast)).